Consider the following 44-residue polypeptide: Peptide Hact-4 (44 aa).

Cystine bridges form between C8-C42, C15-C34, and C20-C43.

Expressed in tentacles.

Its subcellular location is the nematocyst. The protein localises to the secreted. In terms of biological role, peptide with unknown function. Does not exhibit antimicrobial activity against Escherichia coli and Staphylococcus aureus. Does not exhibit any effect on human ion channel TRPV1 in a Xenopus laevis oocytes assay. This Heliofungia actiniformis (Mushroom coral) protein is Peptide Hact-4.